The primary structure comprises 388 residues: Carbohydrate sulfotransferase 4 (388 aa).

Residues 1 to 7 lie on the Cytoplasmic side of the membrane; the sequence is MMLLKKG. The helical; Signal-anchor for type II membrane protein transmembrane segment at 8 to 28 threads the bilayer; the sequence is RLLMFLGSQVIVVALFIHMSV. Over 29 to 388 the chain is Lumenal; the sequence is HRHLSQREES…HILGQVFREG (360 aa). 3'-phosphoadenylyl sulfate contacts are provided by residues 50–56 and 204–212; these read WRSGSSF and RDPRAVFRS. N-linked (GlcNAc...) asparagine glycans are attached at residues Asn307, Asn328, and Asn369.

The protein belongs to the sulfotransferase 1 family. Gal/GlcNAc/GalNAc subfamily. Monomer. Specifically expressed in high endothelial venules (HEV) of peripheral lymph nodes.

It localises to the golgi apparatus membrane. The catalysed reaction is 3-O-{N-acetyl-beta-D-glucosaminyl-(1-&gt;3)-beta-D-galactosyl-(1-&gt;3)-N-acetyl-alpha-D-galactosaminyl}-L-threonyl-[protein] + 3'-phosphoadenylyl sulfate = 3-O-{6-O-sulfo-N-acetyl-beta-D-glucosaminyl-(1-&gt;3)-beta-D-galactosyl-(1-&gt;3)-N-acetyl-alpha-D-galactosaminyl}-L-threonyl-[protein] + adenosine 3',5'-bisphosphate + H(+). It catalyses the reaction 3-O-{N-acetyl-beta-D-glucosaminyl-(1-&gt;3)-beta-D-galactosyl-(1-&gt;3)-N-acetyl-alpha-D-galactosaminyl}-L-seryl-[protein] + 3'-phosphoadenylyl sulfate = 3-O-{6-O-sulfo-N-acetyl-beta-D-glucosaminyl-(1-&gt;3)-beta-D-galactosyl-(1-&gt;3)-N-acetyl-alpha-D-galactosaminyl}-L-seryl-[protein] + adenosine 3',5'-bisphosphate + H(+). It carries out the reaction a 3-O-{beta-D-galactosyl-(1-&gt;3)-[N-acetyl-beta-D-glucosaminyl-(1-&gt;6)]-N-acetyl-alpha-D-galactosaminyl}-L-threonyl-[protein] + 3'-phosphoadenylyl sulfate = 3-O-{beta-D-galactosyl-(1-&gt;3)-[6-O-sulfo-N-acetyl-beta-D-glucosaminyl-(1-&gt;6)]-N-acetyl-alpha-D-galactosaminyl}-L-threonyl-[protein] + adenosine 3',5'-bisphosphate + H(+). The enzyme catalyses 3-O-{beta-D-galactosyl-(1-&gt;3)-[N-acetyl-beta-D-glucosaminyl-(1-&gt;6)]-N-acetyl-alpha-D-galactosaminyl}-L-seryl-[protein] + 3'-phosphoadenylyl sulfate = 3-O-{beta-D-galactosyl-(1-&gt;3)-[6-O-sulfo-N-acetyl-beta-D-glucosaminyl-(1-&gt;6)]-N-acetyl-alpha-D-galactosaminyl}-L-seryl-[protein] + adenosine 3',5'-bisphosphate + H(+). It participates in protein modification; carbohydrate sulfation. In terms of biological role, sulfotransferase involved in SELL/L-selectin ligand biosynthesis pathway. Catalyzes the transfer of the sulfate group from 3'-phospho-5'-adenylyl sulfate (PAPS) onto the hydroxyl group at C-6 position of the non-reducing N-acetylglucosamine (GlcNAc) residue within O-linked mucin-type glycans. Contributes to generate sialyl 6-sulfo Lewis X determinant (also known as MECA-79 epitope) for SELL recognition, a prerequisite for continuous lymphocyte homing into peripheral lymph nodes and antigen immune surveillance. Transfers the sulfate group primarily on core 2 GlcNAcbeta1-6(Galbeta1-3)GalNAcalphaSer/Thr and extended core 1 GlcNAcbeta1-3Galbeta1-3GalNAcalphaSer/Thr based O-linked glycans on CD34 and GLYCAM1 peripheral node addressins (PNAds) expressed on the lumenal side of high endothelial venules (HEVs). The recognition of PNAds by SELL initiates a multistep process comprising tethering and rolling of blood lymphocytes on HEVs against the blood flow, followed by chemokine signaling, integrin-mediated lymphocyte adhesion onto endothelial cells and lymphocyte transendothelial migration. Modulates rolling velocity and differential T and B lymphocyte recruitment into peripheral lymph nodes, with a major role in B lymphocyte homing. Might be redundant in sulfation of MADCAM1 and lymphocyte trafficking to mesenteric lymph nodes. Can also sulfonate core 3 GlcNAcbeta1-3GalNAc-R based glycans as well as GlcNAcbeta1-3Galbeta1-Glc, GlcNAcbeta1-6ManOMe and GlcNAcbeta1-2Man oligosaccharides, which might be ectopically expressed during tumorigenesis. The protein is Carbohydrate sulfotransferase 4 (Chst4) of Mus musculus (Mouse).